The sequence spans 214 residues: Osteoclast-stimulating factor 1 (214 aa).

Ser-2 is subject to N-acetylserine. Residues 12 to 71 form the SH3 domain; it reads GQVKVFRALYTFEPRTPDELYFEEGDIIYITDMSDTNWWKGTSKGRTGLIPSNYVAEQAE. ANK repeat units follow at residues 72-101, 105-135, and 139-168; these read SIDN…GVNG, AGST…ELNQ, and LGDT…RTDL. A Phosphothreonine modification is found at Thr-200. A phosphoserine mark is found at Ser-202 and Ser-213.

As to quaternary structure, interacts with SRC and SMN1. Interacts with FASLG.

It localises to the cytoplasm. Its function is as follows. Induces bone resorption, acting probably through a signaling cascade which results in the secretion of factor(s) enhancing osteoclast formation and activity. The sequence is that of Osteoclast-stimulating factor 1 (OSTF1) from Sus scrofa (Pig).